We begin with the raw amino-acid sequence, 94 residues long: MLKPLGDRVVIELVQAEEKTASGIVLPDTAKEKPQEGKVVAVGTGRVLENGERVALEVAAGDLIIFSKYAGTEVKYEGTDYLILRESDILAVIG.

Belongs to the GroES chaperonin family. In terms of assembly, heptamer of 7 subunits arranged in a ring. Interacts with the chaperonin GroEL.

It is found in the cytoplasm. Functionally, together with the chaperonin GroEL, plays an essential role in assisting protein folding. The GroEL-GroES system forms a nano-cage that allows encapsulation of the non-native substrate proteins and provides a physical environment optimized to promote and accelerate protein folding. GroES binds to the apical surface of the GroEL ring, thereby capping the opening of the GroEL channel. This chain is Co-chaperonin GroES, found in Bacillus cereus (strain ATCC 14579 / DSM 31 / CCUG 7414 / JCM 2152 / NBRC 15305 / NCIMB 9373 / NCTC 2599 / NRRL B-3711).